We begin with the raw amino-acid sequence, 835 residues long: U-box domain-containing protein 35 (835 aa).

3 disordered regions span residues 1–22 (MSRS…SRTV), 177–303 (VRPS…SSNR), and 410–457 (EKEK…LEGT). Pro residues predominate over residues 10–19 (LPPPPPPPPS). The span at 195-218 (RTNSSSGSSGPTSDSSDVMSSAHD) shows a compositional bias: low complexity. A compositionally biased stretch (polar residues) spans 269 to 282 (SSINRSSTDTTSRW). 2 stretches are compositionally biased toward basic and acidic residues: residues 285 to 295 (RRRDYEERKEA) and 410 to 455 (EKEK…EKLE). Residues 340 to 459 (QSYTDNQVNL…EKEKLEGTLG (120 aa)) are a coiled coil. The region spanning 480 to 745 (FSEELKIGMG…DLKDQILPAL (266 aa)) is the Protein kinase domain. Residues 486–494 (IGMGAYGAV) and K507 contribute to the ATP site. The active-site Proton acceptor is the D602. The 71-residue stretch at 765–835 (QPPTHFICPL…TAIMEWRSTR (71 aa)) folds into the U-box domain.

The protein belongs to the protein kinase superfamily. Ser/Thr protein kinase family.

The enzyme catalyses L-seryl-[protein] + ATP = O-phospho-L-seryl-[protein] + ADP + H(+). It carries out the reaction L-threonyl-[protein] + ATP = O-phospho-L-threonyl-[protein] + ADP + H(+). The catalysed reaction is S-ubiquitinyl-[E2 ubiquitin-conjugating enzyme]-L-cysteine + [acceptor protein]-L-lysine = [E2 ubiquitin-conjugating enzyme]-L-cysteine + N(6)-ubiquitinyl-[acceptor protein]-L-lysine.. Its pathway is protein modification; protein ubiquitination. Functions as an E3 ubiquitin ligase. The polypeptide is U-box domain-containing protein 35 (PUB35) (Arabidopsis thaliana (Mouse-ear cress)).